The sequence spans 212 residues: Uridine kinase (212 aa).

13–20 (GGSGSGKT) lines the ATP pocket.

It belongs to the uridine kinase family.

It localises to the cytoplasm. The enzyme catalyses uridine + ATP = UMP + ADP + H(+). It carries out the reaction cytidine + ATP = CMP + ADP + H(+). The protein operates within pyrimidine metabolism; CTP biosynthesis via salvage pathway; CTP from cytidine: step 1/3. It functions in the pathway pyrimidine metabolism; UMP biosynthesis via salvage pathway; UMP from uridine: step 1/1. The polypeptide is Uridine kinase (Bacillus cereus (strain G9842)).